The sequence spans 355 residues: Peptide chain release factor 1 (355 aa).

Glutamine 231 bears the N5-methylglutamine mark. Residues 280–291 (SERLAKESEARK) show a composition bias toward basic and acidic residues. Positions 280 to 303 (SERLAKESEARKSQVGSGDRSERI) are disordered.

This sequence belongs to the prokaryotic/mitochondrial release factor family. Methylated by PrmC. Methylation increases the termination efficiency of RF1.

It is found in the cytoplasm. In terms of biological role, peptide chain release factor 1 directs the termination of translation in response to the peptide chain termination codons UAG and UAA. This chain is Peptide chain release factor 1, found in Campylobacter jejuni subsp. jejuni serotype O:2 (strain ATCC 700819 / NCTC 11168).